We begin with the raw amino-acid sequence, 307 residues long: Pantothenate kinase (307 aa).

ATP is bound at residue 90-97; that stretch reads GSVAVGKS.

This sequence belongs to the prokaryotic pantothenate kinase family.

The protein resides in the cytoplasm. The enzyme catalyses (R)-pantothenate + ATP = (R)-4'-phosphopantothenate + ADP + H(+). It functions in the pathway cofactor biosynthesis; coenzyme A biosynthesis; CoA from (R)-pantothenate: step 1/5. The chain is Pantothenate kinase from Limosilactobacillus reuteri subsp. reuteri (strain JCM 1112) (Lactobacillus reuteri).